The following is a 94-amino-acid chain: Selenoprotein K (94 aa).

The chain crosses the membrane as a helical span at residues 20–42 (LSFITDFFWGIAEFVVFFFKTLL). The interval 48–94 (KRRGYGGSSDSRYDDGRGPPGNPPRRMGRISHLRGPSPPPMAGGUGR) is disordered. Residue U92 is a non-standard amino acid, selenocysteine.

The protein belongs to the selenoprotein K family. As to quaternary structure, interacts with DERL1, DERL2, DERL3 and SELENOS. The SELENOK-SELENOS complex interacts with VCP. Interacts with ZDHHC6. Cleaved by CAPN2/m-calpain in resting macrophages but not in activated macrophages. Macrophage activation up-regulates expression of the calpain inhibitor CAST/calpastatin, resulting in inhibition of CAPN2 activity. In terms of processing, truncated SELENOK proteins produced by failed UGA/Sec decoding are ubiquitinated by the CRL2(KLHDC2) complex, which recognizes the diglycine (Gly-Gly) at the C-terminus of truncated SELENOK proteins.

The protein localises to the endoplasmic reticulum membrane. It localises to the cell membrane. Functionally, required for Ca(2+) flux in immune cells and plays a role in T-cell proliferation and in T-cell and neutrophil migration. Involved in endoplasmic reticulum-associated degradation (ERAD) of soluble glycosylated proteins. Required for palmitoylation and cell surface expression of CD36 and involved in macrophage uptake of low-density lipoprotein and in foam cell formation. Together with ZDHHC6, required for palmitoylation of ITPR1 in immune cells, leading to regulate ITPR1 stability and function. Plays a role in protection of cells from ER stress-induced apoptosis. Protects cells from oxidative stress when overexpressed in cardiomyocytes. The chain is Selenoprotein K from Rattus norvegicus (Rat).